We begin with the raw amino-acid sequence, 380 residues long: Acetylornithine deacetylase (380 aa).

His79 lines the Zn(2+) pocket. Asp81 is a catalytic residue. Asp109 serves as a coordination point for Zn(2+). The active site involves Glu139. Positions 140, 164, and 351 each coordinate Zn(2+).

The protein belongs to the peptidase M20A family. ArgE subfamily. In terms of assembly, homodimer. Zn(2+) serves as cofactor. Requires Co(2+) as cofactor. The cofactor is glutathione.

The protein localises to the cytoplasm. It catalyses the reaction N(2)-acetyl-L-ornithine + H2O = L-ornithine + acetate. The protein operates within amino-acid biosynthesis; L-arginine biosynthesis; L-ornithine from N(2)-acetyl-L-ornithine (linear): step 1/1. Its function is as follows. Catalyzes the hydrolysis of the amide bond of N(2)-acetylated L-amino acids. Cleaves the acetyl group from N-acetyl-L-ornithine to form L-ornithine, an intermediate in L-arginine biosynthesis pathway, and a branchpoint in the synthesis of polyamines. This is Acetylornithine deacetylase from Myxococcus xanthus.